Consider the following 306-residue polypeptide: tRNA pseudouridine synthase B (306 aa).

Residue Asp47 is the Nucleophile of the active site.

It belongs to the pseudouridine synthase TruB family. Type 1 subfamily.

The catalysed reaction is uridine(55) in tRNA = pseudouridine(55) in tRNA. Responsible for synthesis of pseudouridine from uracil-55 in the psi GC loop of transfer RNAs. The sequence is that of tRNA pseudouridine synthase B from Neisseria meningitidis serogroup A / serotype 4A (strain DSM 15465 / Z2491).